Reading from the N-terminus, the 897-residue chain is uncharacterized protein (897 aa).

Disordered regions lie at residues 25–89 and 106–168; these read RLQD…TRKR and PTRL…TPPS. Low complexity-rich tracts occupy residues 32-44, 57-68, and 106-142; these read SSSP…SSSS, SLQNSQSSSYSL, and PTRL…SSVS. The region spanning 263-446 is the Helicase ATP-binding domain; it reads SMEQSSKCGG…YSLLKFLRIK (184 aa). 276–283 is a binding site for ATP; sequence DDMGLGKT. The short motif at 397–400 is the DEAH box element; the sequence is DEAH. The RING-type zinc finger occupies 606–655; the sequence is CSVCLDPCLAPVFIIPCGHFTCQECMSMLVGQKYGSSSTSTIIAKCPMCR. In terms of domain architecture, Helicase C-terminal spans 727–890; it reads QARQTILDII…LSRLDKEELL (164 aa).

It belongs to the SNF2/RAD54 helicase family.

The protein localises to the cytoplasm. The protein resides in the nucleus. This is an uncharacterized protein from Schizosaccharomyces pombe (strain 972 / ATCC 24843) (Fission yeast).